The sequence spans 187 residues: Elongation factor P (187 aa).

The protein belongs to the elongation factor P family.

The protein localises to the cytoplasm. It functions in the pathway protein biosynthesis; polypeptide chain elongation. Involved in peptide bond synthesis. Stimulates efficient translation and peptide-bond synthesis on native or reconstituted 70S ribosomes in vitro. Probably functions indirectly by altering the affinity of the ribosome for aminoacyl-tRNA, thus increasing their reactivity as acceptors for peptidyl transferase. The sequence is that of Elongation factor P from Parasynechococcus marenigrum (strain WH8102).